The sequence spans 238 residues: Ciliary microtubule associated protein 1B (238 aa).

Residues 182–207 form an STPGR repeat; sequence PGPCAYHVVNPMIYKTRAPQFTMLGR. Residues 206–238 form a disordered region; that stretch reads GRTLPPRENTKKPGPASYSVDKVVWSRGSRGRG.

This sequence belongs to the CIMAP family.

The protein localises to the cell projection. Its subcellular location is the cilium. It is found in the flagellum. This Mus musculus (Mouse) protein is Ciliary microtubule associated protein 1B (Cimap1b).